Reading from the N-terminus, the 29-residue chain is M-poneritoxin-Ng3d (29 aa).

In terms of tissue distribution, expressed by the venom gland.

The protein localises to the secreted. Its function is as follows. Has activity against some Gram-positive bacteria and S.cerevisiae. Has a non-hemolytic activity. This is M-poneritoxin-Ng3d from Neoponera goeldii (Ponerine ant).